Reading from the N-terminus, the 875-residue chain is MSKSTAEIRQAFLDFFHSKGHQVVSSSSLVPNNDPTLLFTNAGMNQFKDVFLGLDKRAYSRATTSQRCVRAGGKHNDLENVGYTARHHTFFEMLGNFSFGDYFKHDAISFAWELLTGEQWFNLPKEKLWVTVYETDDEAYEIWANDIGIPRERIIRIGDNKGSAFASDNFWQMGDTGPCGPCTEIFFDHGDHIWGGPPGSAEEDGDRYIEIWNIVFMQFNRQSDGTMLPLPKPSVDTGMGLERIAAVLQHVNSNYEIDLFRDLIKAVAEVTGATDLSSKSLRVIADHIRSCAFLISDGVIPSNENRGYVLRRIIRRAIRHGNMLGAKETFFYKLVAPLIAVMGPAADELKQQQAMVEQVLKTEEEQFARTLERGLALLDEELSKLTGDTLDGETAFRLYDTYGFPVDLTADVCRERNLKVDEAGFEQAMEAQRRRARESSGFGADYNNLIRVDSASQFSGYNHVHQQATVTALFRNGEAVDEIHEGEEAVVVLNQTPFYGESGGQVGDTGELKNATATFAVADTQKYGQAIGHLGQLTHGTLRVNHSIDAQVDVARRNRIRLNHSATHLLHAALRKTLGDHVAQKGSLVNDKYLRFDFSHFEAMKPEQIRLVEDMVNEQIRRNMPVQTEVMELDAAKEKGAMALFGEKYDDQVRVLTMGDFSTELCGGIHASRTGDIGLFRILSESGTAAGIRRIEAVTGEGAIALLHQQSDLLQDVAHLVKGDTNNLADKVRAVLDRSKMLERELQQLKDQQAAQESASLSSNAKLVNGVKLLVSQLDNVEPKMLRTMVDDLKNQLGSAIIVLATTADDKVSLIVGVTKDLTSKVKAGELIADIAQQVGGKGGGRPDMAQAGGTNVQALPSALASVEAWVASRL.

The Zn(2+) site is built by His-564, His-568, Cys-666, and His-670.

This sequence belongs to the class-II aminoacyl-tRNA synthetase family. Homotetramer. Zn(2+) is required as a cofactor.

The protein resides in the cytoplasm. It carries out the reaction tRNA(Ala) + L-alanine + ATP = L-alanyl-tRNA(Ala) + AMP + diphosphate. Catalyzes the attachment of alanine to tRNA(Ala) in a two-step reaction: alanine is first activated by ATP to form Ala-AMP and then transferred to the acceptor end of tRNA(Ala). Also edits incorrectly charged Ser-tRNA(Ala) and Gly-tRNA(Ala) via its editing domain. This chain is Alanine--tRNA ligase, found in Yersinia enterocolitica serotype O:8 / biotype 1B (strain NCTC 13174 / 8081).